Consider the following 133-residue polypeptide: Ribosome-binding factor A (133 aa).

This sequence belongs to the RbfA family. Monomer. Binds 30S ribosomal subunits, but not 50S ribosomal subunits or 70S ribosomes.

The protein resides in the cytoplasm. Its function is as follows. One of several proteins that assist in the late maturation steps of the functional core of the 30S ribosomal subunit. Associates with free 30S ribosomal subunits (but not with 30S subunits that are part of 70S ribosomes or polysomes). Required for efficient processing of 16S rRNA. May interact with the 5'-terminal helix region of 16S rRNA. This is Ribosome-binding factor A from Synechocystis sp. (strain ATCC 27184 / PCC 6803 / Kazusa).